Here is a 131-residue protein sequence, read N- to C-terminus: Transcriptional activator protein (131 aa).

The Nuclear localization signal motif lies at 13–28; that stretch reads KAQHRIAKKRAVRRRR. A zinc finger lies at 33-52; that stretch reads CGCSIYIHINCAKDGNGFTH. The tract at residues 78 to 131 is disordered; sequence DVQXGGSTLHAHKDIPHTNPVQPQPEESTKSSQSVPELPSLDGIDSSFWDDIFE. Residues 117-131 are transactivation; that stretch reads SLDGIDSSFWDDIFE.

The protein belongs to the geminiviridae transcriptional activator protein family. Monomer. Homodimer. Homooligomer. Self-interaction correlates with nuclear localization and efficient activation of transcription. Monomers suppress local silencing by interacting with and inactivating host adenosine kinase 2 (ADK2) in the cytoplasm. Interacts with and inhibits host SNF1 kinase. Binds to ssDNA. In terms of processing, phosphorylated.

It localises to the host nucleus. Its subcellular location is the host cytoplasm. Functionally, strong activator of the late viral genes promoters. Enhances the expression of the capsid protein and nuclear shuttle protein. Acts as a suppressor of RNA-mediated gene silencing, also known as post-transcriptional gene silencing (PTGS), a mechanism of plant viral defense that limits the accumulation of viral RNAs. Suppresses the host RNA silencing by inhibiting adenosine kinase 2 (ADK2), a kinase involved in a general methylation pathway. Also suppresses the host basal defense by interacting with and inhibiting SNF1 kinase, a key regulator of cell metabolism implicated in innate antiviral defense. Determines pathogenicity. This Cucurbita moschata (Winter crookneck squash) protein is Transcriptional activator protein.